The primary structure comprises 149 residues: Aquaporin-like protein 2 (149 aa).

The tract at residues 1–35 (MSNESNDLEKNISHLDPTGVDNAYIPPEQPETKHS) is disordered. The Cytoplasmic segment spans residues 1 to 47 (MSNESNDLEKNISHLDPTGVDNAYIPPEQPETKHSRFNIDRGTLRNH). Residues 48–68 (FIAAVGEFCGTFMFLWCAYVI) form a helical membrane-spanning segment. The Extracellular portion of the chain corresponds to 69 to 89 (CNVANHDVALTTEPEGSHPGQ). A helical membrane pass occupies residues 90-110 (LIMIALGFGFSVMFSIWCFWW). Residues 111–149 (GFEPSRFSLFVFGQSHLTSQMCSDVVSSDHCWDGCWWCR) are Cytoplasmic-facing.

The protein belongs to the MIP/aquaporin (TC 1.A.8) family.

Its subcellular location is the endoplasmic reticulum membrane. The protein localises to the cell membrane. In terms of biological role, water channel required to facilitate the transport of water across membranes. Involved in freeze tolerance, osmotolerance and cell flocculation in liquid cultures. Is non-functional in most laboratory strains. The sequence is that of Aquaporin-like protein 2 (AQY2-2) from Saccharomyces cerevisiae (strain Lalvin EC1118 / Prise de mousse) (Baker's yeast).